The sequence spans 190 residues: dTTP/UTP pyrophosphatase (190 aa).

The active-site Proton acceptor is the Asp70.

The protein belongs to the Maf family. YhdE subfamily. It depends on a divalent metal cation as a cofactor.

The protein resides in the cytoplasm. It carries out the reaction dTTP + H2O = dTMP + diphosphate + H(+). It catalyses the reaction UTP + H2O = UMP + diphosphate + H(+). Functionally, nucleoside triphosphate pyrophosphatase that hydrolyzes dTTP and UTP. May have a dual role in cell division arrest and in preventing the incorporation of modified nucleotides into cellular nucleic acids. This Gloeobacter violaceus (strain ATCC 29082 / PCC 7421) protein is dTTP/UTP pyrophosphatase.